Reading from the N-terminus, the 240-residue chain is UDP-2,3-diacylglucosamine hydrolase (240 aa).

5 residues coordinate Mn(2+): Asp8, His10, Asp41, Asn79, and His114. 79–80 (NR) serves as a coordination point for substrate. Positions 122, 160, 164, 167, and 195 each coordinate substrate. 2 residues coordinate Mn(2+): His195 and His197.

Belongs to the LpxH family. Mn(2+) serves as cofactor.

It is found in the cell inner membrane. The enzyme catalyses UDP-2-N,3-O-bis[(3R)-3-hydroxytetradecanoyl]-alpha-D-glucosamine + H2O = 2-N,3-O-bis[(3R)-3-hydroxytetradecanoyl]-alpha-D-glucosaminyl 1-phosphate + UMP + 2 H(+). It functions in the pathway glycolipid biosynthesis; lipid IV(A) biosynthesis; lipid IV(A) from (3R)-3-hydroxytetradecanoyl-[acyl-carrier-protein] and UDP-N-acetyl-alpha-D-glucosamine: step 4/6. In terms of biological role, hydrolyzes the pyrophosphate bond of UDP-2,3-diacylglucosamine to yield 2,3-diacylglucosamine 1-phosphate (lipid X) and UMP by catalyzing the attack of water at the alpha-P atom. Involved in the biosynthesis of lipid A, a phosphorylated glycolipid that anchors the lipopolysaccharide to the outer membrane of the cell. The protein is UDP-2,3-diacylglucosamine hydrolase of Escherichia coli O6:H1 (strain CFT073 / ATCC 700928 / UPEC).